Consider the following 367-residue polypeptide: mRNA-decapping enzyme-like protein (367 aa).

3 disordered regions span residues 144–179, 196–246, and 299–333; these read PKASSSKSEFEELEAKPTMAVMDGPLEPSSTARDAP, NTAS…SSSP, and PNNASHQQRSYGTPVLQPFPPPTPPPSLAPAPTGP. A compositionally biased stretch (polar residues) spans 196 to 211; it reads NTASGSASGPYQSSAI. A compositionally biased stretch (low complexity) spans 212 to 234; the sequence is PHQPHQPHQPTIAPPVAAAAPPQ. A compositionally biased stretch (polar residues) spans 299 to 309; the sequence is PNNASHQQRSY. Residues 315–331 are compositionally biased toward pro residues; sequence QPFPPPTPPPSLAPAPT.

The protein belongs to the DCP1 family. In terms of assembly, homodimer. Component of the decapping complex. Interacts with DCP2 and DCP5. Interacts with BCHA1. Expressed in seedlings, mostly in root tips, root hairs, and the vascular system. Also present in roots, leaves, stems, and flowers.

The protein resides in the cytoplasm. It localises to the P-body. Functionally, as a component of the decapping complex, involved in the degradation of mRNAs. Essential for postembryonic development. This chain is mRNA-decapping enzyme-like protein, found in Arabidopsis thaliana (Mouse-ear cress).